The sequence spans 268 residues: Putative ABC transporter ATP-binding protein LMOf2365_1216 (268 aa).

Residues 2-237 (LKTEHISFQY…KSNVEQAGLV (236 aa)) form the ABC transporter domain. 35–42 (GANGSGKS) provides a ligand contact to ATP.

Belongs to the ABC transporter superfamily.

It is found in the cell membrane. Functionally, probably part of an ABC transporter complex. Responsible for energy coupling to the transport system. This Listeria monocytogenes serotype 4b (strain F2365) protein is Putative ABC transporter ATP-binding protein LMOf2365_1216.